Here is a 244-residue protein sequence, read N- to C-terminus: CTD nuclear envelope phosphatase 1 (244 aa).

The chain crosses the membrane as a helical span at residues 7–29 (LLGLRTFVAFAAKLWSFFIYLLR). The 168-residue stretch at 57–224 (AQVKRKILVL…LNLLPMLDAL (168 aa)) folds into the FCP1 homology domain.

This sequence belongs to the dullard family. Interacts with CNEP1R1; the complex dephosphorylates LPIN1 and LPIN2. Muscle specific with lower expression in other metabolic tissues.

It is found in the endoplasmic reticulum membrane. The protein resides in the nucleus membrane. The catalysed reaction is O-phospho-L-seryl-[protein] + H2O = L-seryl-[protein] + phosphate. It catalyses the reaction O-phospho-L-threonyl-[protein] + H2O = L-threonyl-[protein] + phosphate. In terms of biological role, serine/threonine protein phosphatase forming with CNEP1R1 an active phosphatase complex that dephosphorylates and may activate LPIN1 and LPIN2. LPIN1 and LPIN2 are phosphatidate phosphatases that catalyze the conversion of phosphatidic acid to diacylglycerol and control the metabolism of fatty acids at different levels. May indirectly modulate the lipid composition of nuclear and/or endoplasmic reticulum membranes and be required for proper nuclear membrane morphology and/or dynamics. May also indirectly regulate the production of lipid droplets and triacylglycerol. May antagonize BMP signaling. The protein is CTD nuclear envelope phosphatase 1 (Ctdnep1) of Mus musculus (Mouse).